We begin with the raw amino-acid sequence, 347 residues long: NADH-ubiquinone oxidoreductase chain 2 (347 aa).

Helical transmembrane passes span 13 to 33 (IFTG…WVGL), 60 to 80 (FLTQ…NSML), 96 to 116 (LMIM…FWVP), 123 to 143 (PLMS…SIMY), 149 to 169 (LNVN…SWGG), 178 to 198 (ILAY…PYNP), 201 to 221 (TILN…LLNL), 247 to 267 (TLLS…WVII), 274 to 294 (NSLI…YFYL), and 326 to 346 (LPTL…MLMI).

Belongs to the complex I subunit 2 family. Core subunit of respiratory chain NADH dehydrogenase (Complex I) which is composed of 45 different subunits. Interacts with TMEM242.

It localises to the mitochondrion inner membrane. The enzyme catalyses a ubiquinone + NADH + 5 H(+)(in) = a ubiquinol + NAD(+) + 4 H(+)(out). Functionally, core subunit of the mitochondrial membrane respiratory chain NADH dehydrogenase (Complex I) which catalyzes electron transfer from NADH through the respiratory chain, using ubiquinone as an electron acceptor. Essential for the catalytic activity and assembly of complex I. The sequence is that of NADH-ubiquinone oxidoreductase chain 2 from Pan troglodytes (Chimpanzee).